The primary structure comprises 145 residues: Glutaconyl-CoA decarboxylase subunit gamma (145 aa).

Positions 52–82 (APAPAAAPAAAPAPAAKPAAAAPAGSVTVSA) are disordered. The segment covering 57–75 (AAPAAAPAPAAKPAAAAPA) has biased composition (low complexity). Residues 77–145 (SVTVSAPMPG…VATGDVMVIL (69 aa)) enclose the Biotinyl-binding domain. Lys112 carries the post-translational modification N6-biotinyllysine.

In terms of assembly, heterooctamer consisting of two alpha, two beta, two gamma and two delta subunits. It depends on biotin as a cofactor.

The enzyme catalyses (2E)-glutaconyl-CoA + Na(+)(in) + H(+) = (2E)-butenoyl-CoA + Na(+)(out) + CO2. It functions in the pathway amino-acid degradation; L-glutamate degradation via hydroxyglutarate pathway; crotonoyl-CoA from L-glutamate: step 5/5. Biotin carrier subunit of the primary sodium pump glutaconyl-CoA decarboxylase (GCD). The chain is Glutaconyl-CoA decarboxylase subunit gamma (gcdC) from Acidaminococcus fermentans (strain ATCC 25085 / DSM 20731 / CCUG 9996 / CIP 106432 / VR4).